The chain runs to 703 residues: WPP domain-interacting tail-anchored protein 1 (703 aa).

Positions 1 to 12 (METETEHDRTVS) are enriched in basic and acidic residues. Disordered regions lie at residues 1–27 (METETEHDRTVSVDDNDSLVPEPSSTK) and 86–107 (FVSKKEEDEEEPSSNVDDDDDS). A compositionally biased stretch (acidic residues) spans 92 to 107 (EDEEEPSSNVDDDDDS). The stretch at 118-183 (SSILNSEVKE…MEQVVEMKKQ (66 aa)) forms a coiled coil. The segment at 189–208 (RLSSGLDEQGSWSGGQTSVS) is disordered. Residues 198–208 (GSWSGGQTSVS) show a composition bias toward polar residues. Coiled coils occupy residues 236-265 (LEKSLAKEMELEKKLSESRNTERELEMKLY), 318-461 (KRED…RDKG), and 500-604 (STVS…SREN). A helical membrane pass occupies residues 679–699 (FKHILVAILVILISSIAYVIS).

In terms of assembly, homodimer. Component of Ran complexes at least composed of WIT1 or WIT2, RANGAP1 or RANGAP2, and WIP1 or WIP2 or WIP3. Interacts with WIP2, WPP1/MAF1, WPP2/MAF2, RANGAP1 and RANGAP2. Component of a ternary complex composed of WPP1, HSP70-1 and WIT1. Interacts with KAKU1. Interacts with WIP1. In terms of tissue distribution, ubiquitous.

It localises to the nucleus envelope. The protein resides in the nucleus membrane. In terms of biological role, together with WIT2, required for the nuclear envelope docking of RANGAP proteins in root tips. The chain is WPP domain-interacting tail-anchored protein 1 (WIT1) from Arabidopsis thaliana (Mouse-ear cress).